The chain runs to 605 residues: Replication protein E1 (605 aa).

The Nuclear localization signal signature appears at 76 to 78; the sequence is KRK. Phosphoserine; by host occurs at positions 81 and 89. Residues 88–97 carry the Nuclear export signal motif; sequence LSPRLESISL. Residues 145–308 form a DNA-binding region region; the sequence is HLGTVDIHYT…TIVGHQSTEA (164 aa). The SF3 helicase domain occupies 407-557; sequence VNVIMFLAAL…FPMKPDNTPE (151 aa). 433–440 provides a ligand contact to ATP; sequence GPPNTGKS. Lysine 514 participates in a covalent cross-link: Glycyl lysine isopeptide (Lys-Gly) (interchain with G-Cter in SUMO). Residues 580-605 form a disordered region; it reads DQEDEGENGESQQAFQCSARSANEHL. Positions 588-605 are enriched in polar residues; the sequence is GESQQAFQCSARSANEHL.

This sequence belongs to the papillomaviridae E1 protein family. In terms of assembly, can form hexamers. Interacts with E2 protein; this interaction increases E1 DNA binding specificity. Interacts with host DNA polymerase subunit POLA2. Interacts with host single stranded DNA-binding protein RPA1. Interacts with host TOP1; this interaction stimulates the enzymatic activity of TOP1. In terms of processing, phosphorylated. Sumoylated.

The protein localises to the host nucleus. The catalysed reaction is Couples ATP hydrolysis with the unwinding of duplex DNA by translocating in the 3'-5' direction.. It carries out the reaction ATP + H2O = ADP + phosphate + H(+). Functionally, ATP-dependent DNA 3'-5' helicase required for initiation of viral DNA replication. It forms a complex with the viral E2 protein. The E1-E2 complex binds to the replication origin which contains binding sites for both proteins. During the initial step, a dimer of E1 interacts with a dimer of protein E2 leading to a complex that binds the viral origin of replication with high specificity. Then, a second dimer of E1 displaces the E2 dimer in an ATP-dependent manner to form the E1 tetramer. Following this, two E1 monomers are added to each half of the site, which results in the formation of two E1 trimers on the viral ori. Subsequently, two hexamers will be created. The double hexamer acts as a bi-directional helicase machinery and unwinds the viral DNA and then recruits the host DNA polymerase to start replication. The sequence is that of Replication protein E1 from Homo sapiens (Human).